Here is a 295-residue protein sequence, read N- to C-terminus: Small ribosomal subunit protein uS2 (295 aa).

It belongs to the universal ribosomal protein uS2 family. Component of the small ribosomal subunit. Mature ribosomes consist of a small (40S) and a large (60S) subunit. The 40S subunit contains about 33 different proteins and 1 molecule of RNA (18S). The 60S subunit contains about 49 different proteins and 3 molecules of RNA (25S, 5.8S and 5S). Interacts with RPS21.

The protein resides in the cytoplasm. Functionally, required for the assembly and/or stability of the 40S ribosomal subunit. Required for the processing of the 20S rRNA-precursor to mature 18S rRNA in a late step of the maturation of 40S ribosomal subunits. The sequence is that of Small ribosomal subunit protein uS2 from Paracoccidioides brasiliensis (strain Pb03).